The primary structure comprises 673 residues: DNA ligase (673 aa).

NAD(+)-binding positions include 33–37 (DYEYD), 82–83 (SL), and glutamate 113. Lysine 115 functions as the N6-AMP-lysine intermediate in the catalytic mechanism. NAD(+)-binding residues include arginine 136, glutamate 170, lysine 285, and lysine 309. Zn(2+)-binding residues include cysteine 403, cysteine 406, cysteine 421, and cysteine 426. Positions 583 to 672 (AKSDILKGYT…SHEEVEKILM (90 aa)) constitute a BRCT domain.

This sequence belongs to the NAD-dependent DNA ligase family. LigA subfamily. It depends on Mg(2+) as a cofactor. Mn(2+) serves as cofactor.

It carries out the reaction NAD(+) + (deoxyribonucleotide)n-3'-hydroxyl + 5'-phospho-(deoxyribonucleotide)m = (deoxyribonucleotide)n+m + AMP + beta-nicotinamide D-nucleotide.. Its function is as follows. DNA ligase that catalyzes the formation of phosphodiester linkages between 5'-phosphoryl and 3'-hydroxyl groups in double-stranded DNA using NAD as a coenzyme and as the energy source for the reaction. It is essential for DNA replication and repair of damaged DNA. The protein is DNA ligase of Caldicellulosiruptor saccharolyticus (strain ATCC 43494 / DSM 8903 / Tp8T 6331).